The following is a 542-amino-acid chain: MTRYIFVTGGVVSSLGKGIASASLAAILEARGLKVTMLKLDPYINVDPGTMSPFQHGEVFVTHDGAETDLDLGHYERFIRTTMTQNNNFTTGRIYEHVLRKERRGDYLGATIQVIPHITDEIKRRIIKGAGDADVALVEIGGTVGDIESQPFLEAIRQLRFEVGAKRAMLMHLTLVPYIATAGETKTKPTQHSVKELRSIGLQPDVLVCRSDHPIDSSSRRKIAQFTNVEERAVIALEDADTIYKIPGILHAQGLDDFVVERFGLQCNSADLSEWDKVVDAKLNPEHEVTIAMVGKYMELLDAYKSLIEAMSHAGITNRTKVNLRYIDSEDIENQGTSLLEGADAILVPGGFGLRGVEGKITAVQYARENKVPYLGICLGMQVAVIEFARNVMGWKDANSTEFDRNSGHPVVGLITEWADATGAVETRTEASDLGGTMRLGAQDCQLAAGSKVHDCYGKDVITERHRHRYEVNNNLLPQLVDAGLVVSGRSEDGALVEVVESKDHPWFVACQFHPEFTSTPRDGHPLFSGFVKAALAQKNKA.

An amidoligase domain region spans residues 1–265; that stretch reads MTRYIFVTGG…DDFVVERFGL (265 aa). Ser-13 serves as a coordination point for CTP. A UTP-binding site is contributed by Ser-13. ATP is bound by residues 14–19 and Asp-71; that span reads SLGKGI. Mg(2+) is bound by residues Asp-71 and Glu-139. CTP is bound by residues 146–148, 186–191, and Lys-222; these read DIE and KTKPTQ. Residues 186-191 and Lys-222 each bind UTP; that span reads KTKPTQ. The Glutamine amidotransferase type-1 domain occupies 290-541; that stretch reads TIAMVGKYME…VKAALAQKNK (252 aa). Gly-351 contributes to the L-glutamine binding site. Residue Cys-378 is the Nucleophile; for glutamine hydrolysis of the active site. L-glutamine contacts are provided by residues 379–382, Glu-402, and Arg-469; that span reads LGMQ. Residues His-514 and Glu-516 contribute to the active site.

It belongs to the CTP synthase family. In terms of assembly, homotetramer.

It carries out the reaction UTP + L-glutamine + ATP + H2O = CTP + L-glutamate + ADP + phosphate + 2 H(+). The enzyme catalyses L-glutamine + H2O = L-glutamate + NH4(+). It catalyses the reaction UTP + NH4(+) + ATP = CTP + ADP + phosphate + 2 H(+). It participates in pyrimidine metabolism; CTP biosynthesis via de novo pathway; CTP from UDP: step 2/2. Its activity is regulated as follows. Allosterically activated by GTP, when glutamine is the substrate; GTP has no effect on the reaction when ammonia is the substrate. The allosteric effector GTP functions by stabilizing the protein conformation that binds the tetrahedral intermediate(s) formed during glutamine hydrolysis. Inhibited by the product CTP, via allosteric rather than competitive inhibition. Its function is as follows. Catalyzes the ATP-dependent amination of UTP to CTP with either L-glutamine or ammonia as the source of nitrogen. Regulates intracellular CTP levels through interactions with the four ribonucleotide triphosphates. This chain is CTP synthase, found in Pseudomonas putida (strain W619).